The following is a 197-amino-acid chain: Adenine phosphoribosyltransferase (197 aa).

This sequence belongs to the purine/pyrimidine phosphoribosyltransferase family. In terms of assembly, homodimer.

The protein resides in the cytoplasm. The enzyme catalyses AMP + diphosphate = 5-phospho-alpha-D-ribose 1-diphosphate + adenine. Its pathway is purine metabolism; AMP biosynthesis via salvage pathway; AMP from adenine: step 1/1. Functionally, catalyzes a salvage reaction resulting in the formation of AMP, that is energically less costly than de novo synthesis. In Ralstonia nicotianae (strain ATCC BAA-1114 / GMI1000) (Ralstonia solanacearum), this protein is Adenine phosphoribosyltransferase.